The chain runs to 620 residues: 1-deoxy-D-xylulose-5-phosphate synthase (620 aa).

Thiamine diphosphate is bound by residues H80 and G121–S123. Position 152 (D152) interacts with Mg(2+). Thiamine diphosphate contacts are provided by residues G153 to A154, N181, Y288, and E370. Residue N181 coordinates Mg(2+).

This sequence belongs to the transketolase family. DXPS subfamily. Homodimer. The cofactor is Mg(2+). Thiamine diphosphate is required as a cofactor.

The enzyme catalyses D-glyceraldehyde 3-phosphate + pyruvate + H(+) = 1-deoxy-D-xylulose 5-phosphate + CO2. Its pathway is metabolic intermediate biosynthesis; 1-deoxy-D-xylulose 5-phosphate biosynthesis; 1-deoxy-D-xylulose 5-phosphate from D-glyceraldehyde 3-phosphate and pyruvate: step 1/1. Catalyzes the acyloin condensation reaction between C atoms 2 and 3 of pyruvate and glyceraldehyde 3-phosphate to yield 1-deoxy-D-xylulose-5-phosphate (DXP). This Escherichia coli O157:H7 protein is 1-deoxy-D-xylulose-5-phosphate synthase.